A 137-amino-acid chain; its full sequence is MTQAASSQRAVYWGTGRRKTAVARVRLVPGTGKLIINDRPGDQYLQYQEALLASVKAPLELLGLENSYDILVRAHGGGVHGQADAIKLGVARALCEVDPANRGPLKTEGYLKRDPRAVERKKYGLRKARKAPQYSKR.

The disordered stretch occupies residues 105–137 (LKTEGYLKRDPRAVERKKYGLRKARKAPQYSKR). Residues 109–122 (GYLKRDPRAVERKK) are compositionally biased toward basic and acidic residues. Residues 123–137 (YGLRKARKAPQYSKR) show a composition bias toward basic residues.

This sequence belongs to the universal ribosomal protein uS9 family.

In Synechococcus sp. (strain JA-3-3Ab) (Cyanobacteria bacterium Yellowstone A-Prime), this protein is Small ribosomal subunit protein uS9.